The chain runs to 154 residues: Large ribosomal subunit protein uL13 (154 aa).

Residues 129–154 (SQHPHEAQQPEALDVGTLNRKNKRIA) form a disordered region.

It belongs to the universal ribosomal protein uL13 family. Part of the 50S ribosomal subunit.

This protein is one of the early assembly proteins of the 50S ribosomal subunit, although it is not seen to bind rRNA by itself. It is important during the early stages of 50S assembly. In Bartonella bacilliformis (strain ATCC 35685 / KC583 / Herrer 020/F12,63), this protein is Large ribosomal subunit protein uL13.